Consider the following 318-residue polypeptide: Ribokinase (318 aa).

Substrate-binding positions include 11 to 13 (NTD), 41 to 45 (GKGAN), and Glu146. ATP contacts are provided by residues Asn190 and 229–234 (TLGSQG). Residues Asp256 and Thr258 each contribute to the K(+) site. 261-262 (GD) lines the ATP pocket. A substrate-binding site is contributed by Asp262. Asp262 serves as the catalytic Proton acceptor. The K(+) site is built by Thr292, Arg295, Gly297, and Ser301.

This sequence belongs to the carbohydrate kinase PfkB family. Ribokinase subfamily. As to quaternary structure, homodimer. The cofactor is Mg(2+).

The protein localises to the cytoplasm. It localises to the nucleus. It catalyses the reaction D-ribose + ATP = D-ribose 5-phosphate + ADP + H(+). It participates in carbohydrate metabolism; D-ribose degradation; D-ribose 5-phosphate from beta-D-ribopyranose: step 2/2. Its activity is regulated as follows. Activated by a monovalent cation that binds near, but not in, the active site. The most likely occupant of the site in vivo is potassium. Ion binding induces a conformational change that may alter substrate affinity. Its function is as follows. Catalyzes the phosphorylation of ribose at O-5 in a reaction requiring ATP and magnesium. The resulting D-ribose-5-phosphate can then be used either for sythesis of nucleotides, histidine, and tryptophan, or as a component of the pentose phosphate pathway. The chain is Ribokinase from Schizosaccharomyces pombe (strain 972 / ATCC 24843) (Fission yeast).